Here is a 213-residue protein sequence, read N- to C-terminus: Orotate phosphoribosyltransferase (213 aa).

Lys-26 lines the 5-phospho-alpha-D-ribose 1-diphosphate pocket. Residue 34-35 coordinates orotate; it reads FF. 5-phospho-alpha-D-ribose 1-diphosphate-binding positions include 72–73, Arg-99, Lys-100, Lys-103, His-105, and 124–132; these read YK and DDVITAGTA. Thr-128 and Arg-156 together coordinate orotate.

The protein belongs to the purine/pyrimidine phosphoribosyltransferase family. PyrE subfamily. In terms of assembly, homodimer. It depends on Mg(2+) as a cofactor.

It carries out the reaction orotidine 5'-phosphate + diphosphate = orotate + 5-phospho-alpha-D-ribose 1-diphosphate. It functions in the pathway pyrimidine metabolism; UMP biosynthesis via de novo pathway; UMP from orotate: step 1/2. Its function is as follows. Catalyzes the transfer of a ribosyl phosphate group from 5-phosphoribose 1-diphosphate to orotate, leading to the formation of orotidine monophosphate (OMP). This is Orotate phosphoribosyltransferase from Escherichia coli O157:H7.